Consider the following 198-residue polypeptide: MVHVCYYRNYGKTFKGPRRPYEKERLDSELKLVGEYGLRNKRELWRVQYSLSRIRNAARDLLTLDEKSPRRIFEGEALLRRMNRYGLLDESQNKLDYVLALTVENFLERRLQTIVFKSGMAKSIHHSRVLIRQRHIRVGKQLVNIPSFMVRLDSQKHIDFALTSPFGGGRPGRVKRRNEKSASKKASGGGDADGDDEE.

S68 is modified (phosphoserine). Residues 109–180 (RRLQTIVFKS…PGRVKRRNEK (72 aa)) form the S4 RNA-binding domain. The segment at 163–198 (TSPFGGGRPGRVKRRNEKSASKKASGGGDADGDDEE) is disordered.

The protein belongs to the universal ribosomal protein uS4 family. Binds to the translation initiation factors TIF3E1.

This is Small ribosomal subunit protein uS4z (RPS9B) from Arabidopsis thaliana (Mouse-ear cress).